The primary structure comprises 167 residues: Peptidoglycan L-alanyl-D-glutamate endopeptidase CwlK (167 aa).

The signal sequence occupies residues 1–26 (MNLPAKTFVILCILFLLDLCFSYIRH).

This sequence belongs to the peptidase M15C family.

It is found in the cell membrane. Cleaves the linkage of the L-alanine-D-glutamic acid of B.subtilis cell wall. This chain is Peptidoglycan L-alanyl-D-glutamate endopeptidase CwlK (cwlK), found in Bacillus subtilis (strain 168).